We begin with the raw amino-acid sequence, 403 residues long: Phosphomevalonate dehydratase large subunit (403 aa).

Residues Gly48, Val49, Ser50, Asn79, and Pro80 each contribute to the (R)-5-phosphomevalonate site. Cys119 is a [4Fe-4S] cluster binding site. Residues Glu138 and Ser139 each contribute to the (R)-5-phosphomevalonate site. Residues Cys301 and Cys358 each contribute to the [4Fe-4S] cluster site. Lys378 is a (R)-5-phosphomevalonate binding site.

It belongs to the AcnX type II large subunit family. As to quaternary structure, heterodimer composed of a large subunit (PMDh-L) and a small subunit (PMDh-S). It depends on [4Fe-4S] cluster as a cofactor.

It carries out the reaction (R)-5-phosphomevalonate = (2E)-3-methyl-5-phosphooxypent-2-enoate + H2O. The protein operates within isoprenoid biosynthesis; isopentenyl diphosphate biosynthesis via mevalonate pathway. Functionally, component of a hydro-lyase that catalyzes the dehydration of mevalonate 5-phosphate (MVA5P) to form trans-anhydromevalonate 5-phosphate (tAHMP). Involved in the archaeal mevalonate (MVA) pathway, which provides fundamental precursors for isoprenoid biosynthesis, such as isopentenyl diphosphate (IPP) and dimethylallyl diphosphate (DMAPP). This is Phosphomevalonate dehydratase large subunit from Methanocaldococcus jannaschii (strain ATCC 43067 / DSM 2661 / JAL-1 / JCM 10045 / NBRC 100440) (Methanococcus jannaschii).